The primary structure comprises 108 residues: Peptidyl-prolyl cis-trans isomerase FKBP1A (108 aa).

Residues 20 to 108 (GQTVVVHYVG…TFDVELLRLE (89 aa)) enclose the PPIase FKBP-type domain.

This sequence belongs to the FKBP-type PPIase family. FKBP1 subfamily.

It is found in the cytoplasm. The enzyme catalyses [protein]-peptidylproline (omega=180) = [protein]-peptidylproline (omega=0). Inhibited by both FK506 and rapamycin. In terms of biological role, keeps in an inactive conformation TGFBR1, the TGF-beta type I serine/threonine kinase receptor, preventing TGF-beta receptor activation in absence of ligand. May modulate the RYR1 calcium channel activity. PPIases accelerate the folding of proteins. It catalyzes the cis-trans isomerization of proline imidic peptide bonds in oligopeptides. This chain is Peptidyl-prolyl cis-trans isomerase FKBP1A (fkbp1a), found in Xenopus laevis (African clawed frog).